Here is a 149-residue protein sequence, read N- to C-terminus: MRLHELYPFAEERASRKRVGRGSGSGLGCTSGKGNKGQNARAGGGVRPGFEGGQMPLQRRLPKRGFKNAPFKATYEVINLDRLVASFEGKTDITLEDIYARGLCKAGASVKILGVGEVSVALTVEAHKFSASAAEKIRNAGGEAKALEG.

The interval 14-63 (ASRKRVGRGSGSGLGCTSGKGNKGQNARAGGGVRPGFEGGQMPLQRRLPK) is disordered. 2 stretches are compositionally biased toward gly residues: residues 21–35 (RGSG…GKGN) and 42–52 (AGGGVRPGFEG).

The protein belongs to the universal ribosomal protein uL15 family. As to quaternary structure, part of the 50S ribosomal subunit.

Binds to the 23S rRNA. The sequence is that of Large ribosomal subunit protein uL15 from Nitratidesulfovibrio vulgaris (strain DSM 19637 / Miyazaki F) (Desulfovibrio vulgaris).